The chain runs to 99 residues: Nucleoid-associated protein SPy_1862/M5005_Spy1580 (99 aa).

The protein belongs to the YbaB/EbfC family. Homodimer.

It localises to the cytoplasm. Its subcellular location is the nucleoid. Functionally, binds to DNA and alters its conformation. May be involved in regulation of gene expression, nucleoid organization and DNA protection. The sequence is that of Nucleoid-associated protein SPy_1862/M5005_Spy1580 from Streptococcus pyogenes serotype M1.